Reading from the N-terminus, the 247-residue chain is TLC domain-containing protein 1 (247 aa).

The signal sequence occupies residues 1–27; sequence MPLLFHPAWPLLLGATLTFRALRRVLC. Over 28 to 46 the chain is Extracellular; that stretch reads RLPQPAHVQTDPLRTWRWH. Residues 40 to 234 form the TLC domain; sequence LRTWRWHNLL…LLRSDFCPER (195 aa). Residues 47–67 form a helical membrane-spanning segment; it reads NLLVSFTHSIVSGIWALLCLW. Residues 68–83 lie on the Cytoplasmic side of the membrane; sequence QTPEMLVEIETAWSAS. Residues 84–104 traverse the membrane as a helical segment; it reads GYLLVCFSAGYFIHDTVDIVV. The Extracellular portion of the chain corresponds to 105-123; that stretch reads SKQTRASWEYLVHHVMAMG. The segment at residues 124 to 144 is an intramembrane region (helical); it reads AFFSGIFWKRFVGGGVLTLLV. Residues 145 to 173 are Extracellular-facing; it reads EVSNIFLTLRMMMKINNAQDLLLYKVNKY. A helical membrane pass occupies residues 174-194; the sequence is INLVMYFLFRLAPQAYLTKFF. Residues 195-201 lie on the Cytoplasmic side of the membrane; that stretch reads LQYAGQR. The chain crosses the membrane as a helical span at residues 202–222; sequence TLGTFLLAILLMLDLMIIIYF. Over 223-247 the chain is Extracellular; that stretch reads SRLLRSDFCPERAPRRQQKDKFLTE.

The protein resides in the cell membrane. Its function is as follows. Regulates the composition and fluidity of the plasma membrane. Inhibits the incorporation of membrane-fluidizing phospholipids containing omega-3 long-chain polyunsaturated fatty acids (LCPUFA) and thereby promotes membrane rigidity. Does not appear to have any effect on LCPUFA synthesis. The sequence is that of TLC domain-containing protein 1 (Tlcd1) from Mus musculus (Mouse).